Here is a 68-residue protein sequence, read N- to C-terminus: Peptide Hp1412 (68 aa).

Positions 1 to 23 (MKTHFAIFLITLFLFQMFSQSDA) are cleaved as a signal peptide. The residue at position 36 (Cys-36) is a Cysteine amide. The propeptide occupies 40-68 (GLSDLYDLDEMFDGEISQADIDFLKELMR).

Belongs to the non-disulfide-bridged peptide (NDBP) superfamily. Short antimicrobial peptide (group 4) family. As to expression, expressed by the venom gland.

The protein resides in the secreted. Its subcellular location is the target cell membrane. Functionally, amphipathic peptide with antimicrobial activity. This is Peptide Hp1412 from Heterometrus petersii (Asian forest scorpion).